The primary structure comprises 251 residues: tRNA (guanine-N(7)-)-methyltransferase (251 aa).

S-adenosyl-L-methionine contacts are provided by residues Gly-71, 94–95 (EL), 128–129 (NS), and Leu-148. Residue Asp-151 is part of the active site. 226-228 (TEE) serves as a coordination point for S-adenosyl-L-methionine.

Belongs to the class I-like SAM-binding methyltransferase superfamily. TrmB family.

Its subcellular location is the nucleus. It carries out the reaction guanosine(46) in tRNA + S-adenosyl-L-methionine = N(7)-methylguanosine(46) in tRNA + S-adenosyl-L-homocysteine. The protein operates within tRNA modification; N(7)-methylguanine-tRNA biosynthesis. Functionally, catalyzes the formation of N(7)-methylguanine at position 46 (m7G46) in tRNA. This Arabidopsis thaliana (Mouse-ear cress) protein is tRNA (guanine-N(7)-)-methyltransferase.